We begin with the raw amino-acid sequence, 250 residues long: 3-deoxy-manno-octulosonate cytidylyltransferase (250 aa).

This sequence belongs to the KdsB family.

It is found in the cytoplasm. The enzyme catalyses 3-deoxy-alpha-D-manno-oct-2-ulosonate + CTP = CMP-3-deoxy-beta-D-manno-octulosonate + diphosphate. The protein operates within nucleotide-sugar biosynthesis; CMP-3-deoxy-D-manno-octulosonate biosynthesis; CMP-3-deoxy-D-manno-octulosonate from 3-deoxy-D-manno-octulosonate and CTP: step 1/1. It participates in bacterial outer membrane biogenesis; lipopolysaccharide biosynthesis. Functionally, activates KDO (a required 8-carbon sugar) for incorporation into bacterial lipopolysaccharide in Gram-negative bacteria. This Syntrophobacter fumaroxidans (strain DSM 10017 / MPOB) protein is 3-deoxy-manno-octulosonate cytidylyltransferase.